The primary structure comprises 211 residues: Large ribosomal subunit protein uL3 (211 aa).

Gln-150 carries the post-translational modification N5-methylglutamine.

This sequence belongs to the universal ribosomal protein uL3 family. Part of the 50S ribosomal subunit. Forms a cluster with proteins L14 and L19. Methylated by PrmB.

One of the primary rRNA binding proteins, it binds directly near the 3'-end of the 23S rRNA, where it nucleates assembly of the 50S subunit. The polypeptide is Large ribosomal subunit protein uL3 (Pseudomonas fluorescens (strain SBW25)).